The primary structure comprises 561 residues: Arginine--tRNA ligase (561 aa).

A 'HIGH' region motif is present at residues 119–129; it reads PNIAKPMSMGH.

Belongs to the class-I aminoacyl-tRNA synthetase family. As to quaternary structure, monomer.

It is found in the cytoplasm. The enzyme catalyses tRNA(Arg) + L-arginine + ATP = L-arginyl-tRNA(Arg) + AMP + diphosphate. The protein is Arginine--tRNA ligase of Lactobacillus acidophilus (strain ATCC 700396 / NCK56 / N2 / NCFM).